Consider the following 324-residue polypeptide: Lactonase drp35 (324 aa).

Residues E47, S109, G111, D129, T132, Y134, D137, N184, D235, and S236 each contribute to the Ca(2+) site. The Proton donor role is filled by D235.

This sequence belongs to the SMP-30/CGR1 family. The cofactor is Ca(2+).

It localises to the cytoplasm. Functionally, exhibits lactonase activity. Acts in cells with perturbed membrane integrity and is possibly related to the membrane homeostasis. This Staphylococcus aureus (strain bovine RF122 / ET3-1) protein is Lactonase drp35 (drp35).